The following is a 283-amino-acid chain: Adenylate kinase 2, chloroplastic (283 aa).

A chloroplast-targeting transit peptide spans 1–59; the sequence is MTGCVNSISPPPVTLYRHRASPSRSSFSLSGDALHSLYRHRRVSRSPSIIAPKFQIVAA. ATP is bound at residue 74–79; that stretch reads ASGKGT. The tract at residues 94-123 is NMP; it reads SAGDLLRAEIASGSENGRRAKEHMEKGQLV. AMP-binding positions include R100, 121–123, 150–153, and Q157; these read QLV and GYPR. The segment at 187-220 is LID; it reads GRRLDPVTGKIYHLKYSPPETEEIAVRLTQRFDD. R188 serves as a coordination point for ATP. 2 residues coordinate AMP: R217 and R228.

The protein belongs to the adenylate kinase family. Monomer.

Its subcellular location is the plastid. It localises to the chloroplast stroma. It catalyses the reaction AMP + ATP = 2 ADP. Functionally, catalyzes the reversible transfer of the terminal phosphate group between ATP and AMP. Plays an important role in cellular energy homeostasis and in adenine nucleotide metabolism. Plays a major role in the equilibration of adenylates and de novo synthesis of ADP in the plastid stroma. This chain is Adenylate kinase 2, chloroplastic, found in Arabidopsis thaliana (Mouse-ear cress).